A 126-amino-acid polypeptide reads, in one-letter code: Aspartate 1-decarboxylase (126 aa).

Ser25 serves as the catalytic Schiff-base intermediate with substrate; via pyruvic acid. Ser25 bears the Pyruvic acid (Ser) mark. A substrate-binding site is contributed by Thr57. Catalysis depends on Tyr58, which acts as the Proton donor. 73–75 is a binding site for substrate; the sequence is GAA.

It belongs to the PanD family. Heterooctamer of four alpha and four beta subunits. Requires pyruvate as cofactor. In terms of processing, is synthesized initially as an inactive proenzyme, which is activated by self-cleavage at a specific serine bond to produce a beta-subunit with a hydroxyl group at its C-terminus and an alpha-subunit with a pyruvoyl group at its N-terminus.

Its subcellular location is the cytoplasm. It carries out the reaction L-aspartate + H(+) = beta-alanine + CO2. It participates in cofactor biosynthesis; (R)-pantothenate biosynthesis; beta-alanine from L-aspartate: step 1/1. In terms of biological role, catalyzes the pyruvoyl-dependent decarboxylation of aspartate to produce beta-alanine. This Thioalkalivibrio sulfidiphilus (strain HL-EbGR7) protein is Aspartate 1-decarboxylase.